The sequence spans 744 residues: CCR4-NOT transcription complex subunit 10 (744 aa).

The segment covering 1 to 16 (MAADKPADQGAEKHEG) has biased composition (basic and acidic residues). Residues 1 to 25 (MAADKPADQGAEKHEGTGQSSGITD) form a disordered region. An N-acetylalanine modification is found at alanine 2. Residues 74–107 (KSNQTTTDNLRQTLNQLKNQVHSAVEEMDGLDDV) adopt a coiled-coil conformation. Low complexity predominate over residues 183–199 (NNNKNGKNETGNNNNKD). Disordered regions lie at residues 183–204 (NNNK…SNHK), 477–521 (QDPK…PPSS), and 602–634 (VSLG…PQCY). The segment covering 484-495 (GAKNSNQLGGNT) has biased composition (polar residues). Positions 496 to 506 (ESSESSETCSS) are enriched in low complexity. A compositionally biased stretch (polar residues) spans 602-612 (VSLGISSNEQD).

Belongs to the CNOT10 family. As to quaternary structure, component of the CCR4-NOT complex; distinct complexes seem to exist that differ in the participation of probably mutually exclusive catalytic subunits. CNOT10 and CNOT11 form a subcomplex docked to the CNOT1 scaffold.

The protein localises to the cytoplasm. The protein resides in the nucleus. Its function is as follows. Component of the CCR4-NOT complex which is one of the major cellular mRNA deadenylases and is linked to various cellular processes including bulk mRNA degradation, miRNA-mediated repression, translational repression during translational initiation and general transcription regulation. Additional complex functions may be a consequence of its influence on mRNA expression. Is not required for association of CNOT7 to the CCR4-NOT complex. The polypeptide is CCR4-NOT transcription complex subunit 10 (CNOT10) (Homo sapiens (Human)).